A 658-amino-acid chain; its full sequence is Carnitine O-palmitoyltransferase 2, mitochondrial (658 aa).

Residues Met-1–Tyr-26 constitute a mitochondrion transit peptide. Over Ser-27–Leu-179 the chain is Mitochondrial matrix. An intramembrane region (note=Mitochondrial inner membrane) is located at residues Asn-180–Asn-209. Residues Ala-210–Lys-658 are Mitochondrial matrix-facing. His-373 acts as the Proton acceptor in catalysis. Gly-453 to Asp-465 is a binding site for CoA. The (R)-carnitine site is built by Tyr-487, Ser-489, and Thr-500.

It belongs to the carnitine/choline acetyltransferase family.

The protein localises to the mitochondrion inner membrane. The enzyme catalyses (R)-carnitine + hexadecanoyl-CoA = O-hexadecanoyl-(R)-carnitine + CoA. It catalyses the reaction octanoyl-CoA + (R)-carnitine = O-octanoyl-(R)-carnitine + CoA. The catalysed reaction is decanoyl-CoA + (R)-carnitine = O-decanoyl-(R)-carnitine + CoA. It carries out the reaction dodecanoyl-CoA + (R)-carnitine = O-dodecanoyl-R-carnitine + CoA. The enzyme catalyses tetradecanoyl-CoA + (R)-carnitine = O-tetradecanoyl-(R)-carnitine + CoA. It catalyses the reaction (R)-carnitine + octadecanoyl-CoA = O-octadecanoyl-(R)-carnitine + CoA. The catalysed reaction is eicosanoyl-CoA + (R)-carnitine = O-eicosanoyl-(R)-carnitine + CoA. It carries out the reaction (9Z)-tetradecenoyl-CoA + (R)-carnitine = O-(9Z)-tetradecenoyl-(R)-carnitine + CoA. The enzyme catalyses (5Z)-tetradecenoyl-CoA + (R)-carnitine = O-(5Z)-tetradecenoyl-(R)-carnitine + CoA. It catalyses the reaction (R)-carnitine + (9Z)-octadecenoyl-CoA = O-(9Z)-octadecenoyl-(R)-carnitine + CoA. The catalysed reaction is 4,8-dimethylnonanoyl-CoA + (R)-carnitine = O-4,8-dimethylnonanoyl-(R)-carnitine + CoA. It participates in lipid metabolism; fatty acid beta-oxidation. Functionally, involved in the intramitochondrial synthesis of acylcarnitines from accumulated acyl-CoA metabolites. Reconverts acylcarnitines back into the respective acyl-CoA esters that can then undergo beta-oxidation, an essential step for the mitochondrial uptake of long-chain fatty acids and their subsequent beta-oxidation in the mitochondrion. Active with medium (C8-C12) and long-chain (C14-C18) acyl-CoA esters. In Xenopus tropicalis (Western clawed frog), this protein is Carnitine O-palmitoyltransferase 2, mitochondrial (cpt2).